Consider the following 143-residue polypeptide: Transcription antitermination protein NusB (143 aa).

It belongs to the NusB family.

In terms of biological role, involved in transcription antitermination. Required for transcription of ribosomal RNA (rRNA) genes. Binds specifically to the boxA antiterminator sequence of the ribosomal RNA (rrn) operons. The sequence is that of Transcription antitermination protein NusB from Anaeromyxobacter sp. (strain Fw109-5).